A 140-amino-acid chain; its full sequence is Oleosin Cor a 13 (140 aa).

A run of 2 helical transmembrane segments spans residues 31–51 (GSLL…LTLA) and 75–95 (GFLA…WIYR).

It belongs to the oleosin family. Expressed in seeds.

It is found in the lipid droplet. The protein localises to the membrane. Functionally, may have a structural role to stabilize the lipid body during desiccation of the seed by preventing coalescence of the oil. Probably interacts with both lipid and phospholipid moieties of lipid bodies. May also provide recognition signals for specific lipase anchorage in lipolysis during seedling growth. This chain is Oleosin Cor a 13, found in Corylus avellana (European hazel).